We begin with the raw amino-acid sequence, 201 residues long: MLRKVVRDARLRARVLERVEEFRLNKRASERVWFRELVLCILTANSSFIGAFTALQYLGDLILYGSIEEISSALKNAGYRFPNLKARYIIESRSYYGKLREIGRVADRDQIEAREILLEIKGLGMKEASHFLRNMGYLDLAIIDRHILRFFSDYLEDQKISSKSKYFELESVFRSIASALDLPVGVLDLYVWYLKTGKLAK.

Residues Lys126 and Asp144 contribute to the active site.

This sequence belongs to the type-2 OGG1 family.

The catalysed reaction is 2'-deoxyribonucleotide-(2'-deoxyribose 5'-phosphate)-2'-deoxyribonucleotide-DNA = a 3'-end 2'-deoxyribonucleotide-(2,3-dehydro-2,3-deoxyribose 5'-phosphate)-DNA + a 5'-end 5'-phospho-2'-deoxyribonucleoside-DNA + H(+). Its function is as follows. Catalyzes the excision of an oxidatively damaged form of guanine (7,8-dihydro-8-oxoguanine = 8-oxoG) from DNA. Also cleaves the DNA backbone at apurinic/apyrimidinic sites (AP sites). The protein is 8-oxoguanine DNA glycosylase/AP lyase of Metallosphaera sedula (strain ATCC 51363 / DSM 5348 / JCM 9185 / NBRC 15509 / TH2).